Consider the following 60-residue polypeptide: uncharacterized protein (60 aa).

This sequence to E.coli YjeQ and H.influenzae HI_1714.

This is an uncharacterized protein from Azotobacter vinelandii.